Here is an 89-residue protein sequence, read N- to C-terminus: Small ribosomal subunit protein uS19 (89 aa).

Belongs to the universal ribosomal protein uS19 family.

Protein S19 forms a complex with S13 that binds strongly to the 16S ribosomal RNA. The chain is Small ribosomal subunit protein uS19 from Parabacteroides distasonis (strain ATCC 8503 / DSM 20701 / CIP 104284 / JCM 5825 / NCTC 11152).